The sequence spans 400 residues: MKEKTIIIVGGGQAAAMAAASLRQQGFTGELHLFSDEQHLPYERPPLSKSMLLEDSPQLQSVLPAHWWQENNVHLHSGVTIKTLGRDTRELVLTNGESWHWDQLFIATGAAARPLPLLDALGERCFTLRHAGDAARLREVLQPERSVVIVGAGTIGLELAASATQRGCKATVIELAATVMGRNAPPPVQRYLLQRHQQAGVRILLNNAIEHVVDGENVELTLQSGETLRADVVIYGIGISANDQLAREANLDTANGIVIDEACRTCDPAIFAGGDVAITRLDNGALHRCESWENANNQAQIAASAMLGLPLPRLPPPWFWSDQYSDNLQFIGDMRGDDWLCRGNPETQKAIWFNLQNGVLIGAVTLNQGREIRLIRKWIQSGKTFDAKLLTDEHIALKSL.

5–36 is an FAD binding site; the sequence is TIIIVGGGQAAAMAAASLRQQGFTGELHLFSD. NAD(+) is bound at residue 146–174; it reads SVVIVGAGTIGLELAASATQRGCKATVIE.

This sequence belongs to the bacterial ring-hydroxylating dioxygenase ferredoxin reductase family. In terms of assembly, this dioxygenase system consists of four proteins: the two subunits of the hydroxylase component (HcaE and HcaF), a ferredoxin (HcaC) and a ferredoxin reductase (HcaD). FAD serves as cofactor.

The enzyme catalyses 2 reduced [2Fe-2S]-[ferredoxin] + NAD(+) + H(+) = 2 oxidized [2Fe-2S]-[ferredoxin] + NADH. Its pathway is aromatic compound metabolism; 3-phenylpropanoate degradation. Functionally, part of the multicomponent 3-phenylpropionate dioxygenase, that converts 3-phenylpropionic acid (PP) and cinnamic acid (CI) into 3-phenylpropionate-dihydrodiol (PP-dihydrodiol) and cinnamic acid-dihydrodiol (CI-dihydrodiol), respectively. In Escherichia coli O7:K1 (strain IAI39 / ExPEC), this protein is 3-phenylpropionate/cinnamic acid dioxygenase ferredoxin--NAD(+) reductase component.